A 152-amino-acid polypeptide reads, in one-letter code: Succinate dehydrogenase [ubiquinone] cytochrome b small subunit A, mitochondrial (152 aa).

A mitochondrion-targeting transit peptide spans M1–S21. The Mitochondrial matrix segment spans residues L22 to S56. A helical membrane pass occupies residues L57–L78. Residues Y79–A83 lie on the Mitochondrial intermembrane side of the membrane. The chain crosses the membrane as a helical span at residues V84–V104. Residue H95 participates in heme b binding. Residues T105 to K113 are Mitochondrial matrix-facing. Y107 contributes to the a ubiquinone binding site. Residues I114–F135 traverse the membrane as a helical segment. Residues N136–L152 are Mitochondrial intermembrane-facing.

The protein belongs to the CybS family. In terms of assembly, component of complex II composed of four subunits: the flavoprotein (FP) SDHA, iron-sulfur protein (IP) SDHB, and a cytochrome b560 composed of SDHC and SDHD.

It is found in the mitochondrion inner membrane. The protein operates within carbohydrate metabolism; tricarboxylic acid cycle. Membrane-anchoring subunit of succinate dehydrogenase (SDH) that is involved in complex II of the mitochondrial electron transport chain and is responsible for transferring electrons from succinate to ubiquinone (coenzyme Q). SDH also oxidizes malate to the non-canonical enol form of oxaloacetate, enol-oxaloacetate. Enol-oxaloacetate, which is a potent inhibitor of the succinate dehydrogenase activity, is further isomerized into keto-oxaloacetate. The chain is Succinate dehydrogenase [ubiquinone] cytochrome b small subunit A, mitochondrial (sdhd-a) from Xenopus laevis (African clawed frog).